Reading from the N-terminus, the 1141-residue chain is Isoleucine--tRNA ligase (1141 aa).

Residues 50–60 (PSANGMPGIHH) carry the 'HIGH' region motif. Residues 689–693 (KMSKR) carry the 'KMSKS' region motif. K692 provides a ligand contact to ATP.

It belongs to the class-I aminoacyl-tRNA synthetase family. IleS type 2 subfamily. As to quaternary structure, monomer. Zn(2+) is required as a cofactor.

It is found in the cytoplasm. The catalysed reaction is tRNA(Ile) + L-isoleucine + ATP = L-isoleucyl-tRNA(Ile) + AMP + diphosphate. Its function is as follows. Catalyzes the attachment of isoleucine to tRNA(Ile). As IleRS can inadvertently accommodate and process structurally similar amino acids such as valine, to avoid such errors it has two additional distinct tRNA(Ile)-dependent editing activities. One activity is designated as 'pretransfer' editing and involves the hydrolysis of activated Val-AMP. The other activity is designated 'posttransfer' editing and involves deacylation of mischarged Val-tRNA(Ile). The chain is Isoleucine--tRNA ligase from Bacteroides fragilis (strain ATCC 25285 / DSM 2151 / CCUG 4856 / JCM 11019 / LMG 10263 / NCTC 9343 / Onslow / VPI 2553 / EN-2).